The primary structure comprises 60 residues: Large ribosomal subunit protein bL32 (60 aa).

Belongs to the bacterial ribosomal protein bL32 family.

The protein is Large ribosomal subunit protein bL32 (rpmF) of Borreliella burgdorferi (strain ATCC 35210 / DSM 4680 / CIP 102532 / B31) (Borrelia burgdorferi).